The primary structure comprises 254 residues: Probable phosphoglycerate mutase 4 (254 aa).

Substrate-binding positions include 10-17 and 23-24; these read RHGESTWN and SC. Histidine 11 functions as the Tele-phosphohistidine intermediate in the catalytic mechanism. 2 positions are modified to phosphoserine: serine 14 and serine 23. A Phosphotyrosine modification is found at tyrosine 26. Phosphoserine is present on serine 31. Residues arginine 62, 89–92, and lysine 100 each bind substrate; that span reads ERHY. The active-site Proton donor/acceptor is glutamate 89. N6-acetyllysine is present on lysine 106. Residue 116-117 participates in substrate binding; the sequence is RR. A Phosphoserine modification is found at serine 118. Position 187-188 (187-188) interacts with substrate; the sequence is GN. Lysine 251 carries the N6-acetyllysine; alternate modification. Lysine 251 is modified (N6-succinyllysine; alternate). Lysine 253 and lysine 254 each carry N6-acetyllysine.

Belongs to the phosphoglycerate mutase family. BPG-dependent PGAM subfamily.

The catalysed reaction is (2R)-2-phosphoglycerate = (2R)-3-phosphoglycerate. It catalyses the reaction (2R)-3-phospho-glyceroyl phosphate = (2R)-2,3-bisphosphoglycerate + H(+). The protein is Probable phosphoglycerate mutase 4 (PGAM4) of Pan troglodytes (Chimpanzee).